The following is a 205-amino-acid chain: Non-specific lipid transfer protein GPI-anchored 21 (205 aa).

Residues 1–27 (MNSNSFLISAALIFSLLSSNSPTSILA) form the signal peptide. Cystine bridges form between cysteine 33–cysteine 75, cysteine 44–cysteine 59, cysteine 60–cysteine 100, and cysteine 73–cysteine 109. Asparagine 89 carries an N-linked (GlcNAc...) asparagine glycan. Residues 116-182 (LPTPGPASFG…FAPPPPSSSP (67 aa)) are disordered. Over residues 126–156 (PTTSPTDSQTSDPEGSASFRPPTSPTTSQTP) the composition is skewed to low complexity. Serine 179 is lipidated: GPI-anchor amidated serine. Residues 180–205 (SSPSSSHSLKLSYLLFAFAFTIIKFI) constitute a propeptide, removed in mature form.

The protein belongs to the plant LTP family.

It is found in the cell membrane. Functionally, probable lipid transfer protein. The chain is Non-specific lipid transfer protein GPI-anchored 21 from Arabidopsis thaliana (Mouse-ear cress).